The following is a 57-amino-acid chain: Large ribosomal subunit protein bL32 (57 aa).

Residues 1-19 are compositionally biased toward basic residues; the sequence is MAVPKRRMSRANTRSRRAQ. Residues 1-20 are disordered; that stretch reads MAVPKRRMSRANTRSRRAQW.

Belongs to the bacterial ribosomal protein bL32 family.

The sequence is that of Large ribosomal subunit protein bL32 from Mycobacterium avium (strain 104).